Reading from the N-terminus, the 356-residue chain is Rhomboid-related protein 1 (356 aa).

7 helical membrane passes run 107 to 129, 172 to 194, 201 to 223, 227 to 249, 256 to 275, 290 to 312, and 319 to 341; these read WCPPPIFMLLITIIQVGIFFFYW, YMFLHAGLNHLLGNVIIQLLVGI, KIWRIGPIYLLAVTSGSLLQYAI, SLLVGASAGVYALIFAHVANVIL, LRWIRVLVLFVFIFLDFGGA, HLAHIAGAVTGLFFGYVVLYNVV, and IIRYVCLFLYSAFFATTIIFVIV. Catalysis depends on S233, which acts as the Nucleophile. H293 is an active-site residue.

It belongs to the peptidase S54 family.

It localises to the membrane. It carries out the reaction Cleaves type-1 transmembrane domains using a catalytic dyad composed of serine and histidine that are contributed by different transmembrane domains.. In terms of biological role, serine protease which activates lin-3 isoform a in the proximal vulva precursor cells (VPC) during vulva development to transmit the inductive anchor cell signal to the distal VPCs. The polypeptide is Rhomboid-related protein 1 (Caenorhabditis elegans).